The following is a 405-amino-acid chain: Pentatricopeptide repeat-containing protein At3g14580, mitochondrial (405 aa).

The N-terminal 37 residues, 1–37, are a transit peptide targeting the mitochondrion; sequence MILRRLVLSATSNSNPRRSQSLSSSGVRILSSSSSDR. A disordered region spans residues 13 to 44; that stretch reads NSNPRRSQSLSSSGVRILSSSSSDRYTSSSQR. 8 PPR repeats span residues 94–124, 130–165, 166–200, 201–235, 236–270, 271–305, 306–340, and 341–375; these read TESL…IKLE, SEEF…GCWP, SSKS…GVEI, DACC…KSRP, NVMT…RIEP, DTIT…GCEP, NPGT…GMRP, and SFLS…GFVP.

The protein belongs to the PPR family. P subfamily.

It localises to the mitochondrion. This is Pentatricopeptide repeat-containing protein At3g14580, mitochondrial from Arabidopsis thaliana (Mouse-ear cress).